Consider the following 257-residue polypeptide: Imidazole glycerol phosphate synthase subunit HisF (257 aa).

Active-site residues include D12 and D131.

Belongs to the HisA/HisF family. Heterodimer of HisH and HisF.

The protein resides in the cytoplasm. The catalysed reaction is 5-[(5-phospho-1-deoxy-D-ribulos-1-ylimino)methylamino]-1-(5-phospho-beta-D-ribosyl)imidazole-4-carboxamide + L-glutamine = D-erythro-1-(imidazol-4-yl)glycerol 3-phosphate + 5-amino-1-(5-phospho-beta-D-ribosyl)imidazole-4-carboxamide + L-glutamate + H(+). The protein operates within amino-acid biosynthesis; L-histidine biosynthesis; L-histidine from 5-phospho-alpha-D-ribose 1-diphosphate: step 5/9. Functionally, IGPS catalyzes the conversion of PRFAR and glutamine to IGP, AICAR and glutamate. The HisF subunit catalyzes the cyclization activity that produces IGP and AICAR from PRFAR using the ammonia provided by the HisH subunit. This Rhodococcus opacus (strain B4) protein is Imidazole glycerol phosphate synthase subunit HisF.